The following is a 304-amino-acid chain: Galactose 1-dehydrogenase (304 aa).

The protein belongs to the Gfo/Idh/MocA family. Homodimer.

It is found in the cytoplasm. It catalyses the reaction D-galactose + NAD(+) = D-galactono-1,4-lactone + NADH + H(+). It participates in carbohydrate metabolism; galactose metabolism. Its function is as follows. Catalyzes the dehydrogenation of D-galactose by either NAD(+) or NADP(+). Oxidizes following sugars in decreasing order: D-fucose &gt; D-galactose &gt; L-arabinose &gt; 2-deoxy-D-galactose &gt;&gt; 4-deoxy-D-galactose &gt; 2-deoxy-2-amino-D-galactose. This is Galactose 1-dehydrogenase (gal) from Pseudomonas fluorescens.